A 445-amino-acid polypeptide reads, in one-letter code: mRNA cleavage and polyadenylation factor CLP1 (445 aa).

ATP-binding positions include D33, K72, and 133-138 (QTGKTS).

This sequence belongs to the Clp1 family. Clp1 subfamily. In terms of assembly, component of the cleavage factor IA (CF IA) complex, which is a heterohexameric complex with 2:2:1:1 stoichiometry of RNA14, RNA15, PCF11 and CLP1. It contains 2 copies of an RNA14-RNA15 dimer and 1 copy of CLP1-PCF11. The complex interacts with the cleavage factor HRB1/CF IB to form the cleavage factor I (CF I) complex, and binds to RNA. Interacts directly with PCF11. Interacts with the CPF components CFT1, PTA1, PFS2, YSH1 and SSU72.

The protein resides in the nucleus. Component of the cleavage factor IA (CF IA) complex, which is involved in the endonucleolytic cleavage during polyadenylation-dependent pre-mRNA 3'-end formation. Associates with HRB1/CF IB to form the cleavage factor I (CF I) complex. CF I is required for correct positioning of a larger protein complex, the cleavage and polyadenylation factor (CPF) complex, which contains the catalytic subunits executing mRNA cleavage and polyadenylation. CLP1 mediates interactions between CF IA and CPF factors. CLP1 is also involved in maintaining the CF IA interaction with the C-terminal domain of RNA Pol II largest subunit via PCF11, which links pre-mRNA 3'-end processing to transcription termination. This chain is mRNA cleavage and polyadenylation factor CLP1, found in Saccharomyces cerevisiae (strain YJM789) (Baker's yeast).